Reading from the N-terminus, the 271-residue chain is Formamidopyrimidine-DNA glycosylase (271 aa).

The active-site Schiff-base intermediate with DNA is the P2. The Proton donor role is filled by E3. K57 functions as the Proton donor; for beta-elimination activity in the catalytic mechanism. DNA is bound by residues H90, R109, and R151. The FPG-type zinc-finger motif lies at 236-270 (MVYGRAGEACVTCKTKLQEIRQSNRSSVFCPSCQQ). R260 functions as the Proton donor; for delta-elimination activity in the catalytic mechanism.

It belongs to the FPG family. Monomer. It depends on Zn(2+) as a cofactor.

The catalysed reaction is Hydrolysis of DNA containing ring-opened 7-methylguanine residues, releasing 2,6-diamino-4-hydroxy-5-(N-methyl)formamidopyrimidine.. It catalyses the reaction 2'-deoxyribonucleotide-(2'-deoxyribose 5'-phosphate)-2'-deoxyribonucleotide-DNA = a 3'-end 2'-deoxyribonucleotide-(2,3-dehydro-2,3-deoxyribose 5'-phosphate)-DNA + a 5'-end 5'-phospho-2'-deoxyribonucleoside-DNA + H(+). Its function is as follows. Involved in base excision repair of DNA damaged by oxidation or by mutagenic agents. Acts as a DNA glycosylase that recognizes and removes damaged bases. Has a preference for oxidized purines, such as 7,8-dihydro-8-oxoguanine (8-oxoG). Has AP (apurinic/apyrimidinic) lyase activity and introduces nicks in the DNA strand. Cleaves the DNA backbone by beta-delta elimination to generate a single-strand break at the site of the removed base with both 3'- and 5'-phosphates. The chain is Formamidopyrimidine-DNA glycosylase from Colwellia psychrerythraea (strain 34H / ATCC BAA-681) (Vibrio psychroerythus).